We begin with the raw amino-acid sequence, 338 residues long: Lipoate-protein ligase A (338 aa).

Residues 29-216 enclose the BPL/LPL catalytic domain; it reads DPNQRVLFLW…AFFSHYGERV (188 aa). Residues Arg71, 76-79, and Lys134 each bind ATP; that span reads GAVF. Lys134 contributes to the (R)-lipoate binding site.

This sequence belongs to the LplA family. Monomer.

The protein localises to the cytoplasm. It carries out the reaction L-lysyl-[lipoyl-carrier protein] + (R)-lipoate + ATP = N(6)-[(R)-lipoyl]-L-lysyl-[lipoyl-carrier protein] + AMP + diphosphate + H(+). It participates in protein modification; protein lipoylation via exogenous pathway; protein N(6)-(lipoyl)lysine from lipoate: step 1/2. It functions in the pathway protein modification; protein lipoylation via exogenous pathway; protein N(6)-(lipoyl)lysine from lipoate: step 2/2. Catalyzes both the ATP-dependent activation of exogenously supplied lipoate to lipoyl-AMP and the transfer of the activated lipoyl onto the lipoyl domains of lipoate-dependent enzymes. This chain is Lipoate-protein ligase A, found in Aeromonas hydrophila subsp. hydrophila (strain ATCC 7966 / DSM 30187 / BCRC 13018 / CCUG 14551 / JCM 1027 / KCTC 2358 / NCIMB 9240 / NCTC 8049).